Reading from the N-terminus, the 253-residue chain is Isoprenyl transferase (253 aa).

Residue Asp-30 is part of the active site. Residue Asp-30 participates in Mg(2+) binding. Substrate is bound by residues 31–34 (GNRR), Trp-35, His-51, and 79–81 (STE). Residue Asn-82 is the Proton acceptor of the active site. Substrate is bound by residues Phe-83, Arg-85, Arg-202, and 208 to 210 (RVS). Glu-221 contacts Mg(2+).

The protein belongs to the UPP synthase family. In terms of assembly, homodimer. Requires Mg(2+) as cofactor.

In terms of biological role, catalyzes the condensation of isopentenyl diphosphate (IPP) with allylic pyrophosphates generating different type of terpenoids. The protein is Isoprenyl transferase of Chlamydia trachomatis serovar D (strain ATCC VR-885 / DSM 19411 / UW-3/Cx).